A 272-amino-acid polypeptide reads, in one-letter code: Biglycan (272 aa).

The signal sequence occupies residues 1-16 (MWPLWLLASLLALSQA). A propeptide spanning residues 17–37 (LPFEQKAFWDFTLDDGLPMLN) is cleaved from the precursor. Residues Ser-42 and Ser-48 are each glycosylated (O-linked (Xyl...) (glycosaminoglycan) serine). In terms of domain architecture, LRRNT spans 55–91 (ALPPTFSAMCPFGCHCHLRVVQCSDLGLKAVPKEISP). 2 disulfides stabilise this stretch: Cys-64–Cys-70 and Cys-68–Cys-77. 8 LRR repeats span residues 92–113 (DTTLLDLQNNDISELRKDDFKG), 116–137 (HLYALVLVNNKISRSTRRPSAP), 138–161 (DGLKLNYLRISEAKLTGIPKDLPE), 162–183 (TLNELHLDHNKIQAIELEDLLR), 186–209 (KLYRLGLGHNQIRMIENGSLSFLP), 210–232 (TLRELHLDNNKLSRVPAGLPDLK), 233–254 (LLQVVYLHTNNITKVGVNDFCP), and 255–272 (VGFGVKRAYYNGISLFNN).

This sequence belongs to the small leucine-rich proteoglycan (SLRP) family. SLRP class I subfamily. In terms of assembly, homodimer. Forms a ternary complex with MFAP2 and ELN. The two attached glycosaminoglycan chains can be either chondroitin sulfate or dermatan sulfate. In terms of tissue distribution, found in several connective tissues, especially in articular cartilages.

It is found in the secreted. It localises to the extracellular space. The protein localises to the extracellular matrix. In terms of biological role, may be involved in collagen fiber assembly. This is Biglycan (BGN) from Sus scrofa (Pig).